The sequence spans 500 residues: NAD(P)H-quinone oxidoreductase chain 4, chloroplastic (500 aa).

Helical transmembrane passes span 4 to 24 (FPWLTIIVVLPISAGSSIGFL), 37 to 57 (ICICILELLLTTYAFCYHFQL), 87 to 107 (MGPVLLTGFITTLATLAAWPV), 113 to 130 (LFHFLMLAMYSGQIGSFS), 134 to 154 (LLLFFMMWELELIPIYLLLSL), 167 to 187 (FILYTAGGSIFLLMGVSGMGL), 208 to 228 (ALEIIFYIGFFIAYAAKSPII), 242 to 262 (HYSTCMLLAGILLKMGAYGLV), 272 to 292 (AHSIFSPWLMIIGAIQIIYAA), 305 to 325 (IAYSSVSHMGFITIGIGSITD), 330 to 350 (GSILQIISHGFIGAALFFLAG), 386 to 406 (LALPGMSGFVAESVVFLGIIT), 416 to 436 (ILITFVMAIGMILTPIYSLSM), and 462 to 482 (LFILICILLPVIGIGIYPDFV).

This sequence belongs to the complex I subunit 4 family.

Its subcellular location is the plastid. The protein localises to the chloroplast thylakoid membrane. The catalysed reaction is a plastoquinone + NADH + (n+1) H(+)(in) = a plastoquinol + NAD(+) + n H(+)(out). It catalyses the reaction a plastoquinone + NADPH + (n+1) H(+)(in) = a plastoquinol + NADP(+) + n H(+)(out). The chain is NAD(P)H-quinone oxidoreductase chain 4, chloroplastic from Illicium oligandrum (Star anise).